Consider the following 598-residue polypeptide: Arylsulfate sulfotransferase AssT (598 aa).

The N-terminal stretch at 1–27 (MFHPYRKTLLSGTVALALGLFATGAIA) is a signal peptide. 4-methylumbelliferone-binding residues include His-279 and His-383. Cys-445 and Cys-451 form a disulfide bridge. Residue His-463 participates in 4-methylumbelliferone binding. The Nucleophile; sulfurylated histidine covalent intermediate role is filled by His-463.

Belongs to the aryl sulfotransferase family. As to quaternary structure, monomer.

The protein resides in the periplasm. It catalyses the reaction an aryl sulfate + a phenol = an aryl sulfate + a phenol. The enzyme catalyses 4-methylumbelliferone sulfate + phenol = phenyl sulfate + 4-methylumbelliferone. The catalysed reaction is 2-naphthyl sulfate + phenol = phenyl sulfate + 2-naphthol. Its function is as follows. Catalyzes the transfer of a sulfate group from a phenyl sulfate ester to other phenolic compounds. Is able to use several substrate donors and acceptors in vitro: using phenol as an acceptor substrate, 4-methylumbelliferyl sulfate is the best donor substrate, followed by beta-naphthyl sulfate, p-nitrophenyl sulfate (PNS), and alpha-naphthyl sulfate; using PNS as a donor substrate, alpha-naphthol is the best acceptor substrate, followed by phenol, resorcinol, p-acetaminophen, tyramine, and tyrosine. Cannot use 3'-phosphoadenosine-5'-phophosulfate (PAPS), the donor substrate of mammalian sulfotransferase. May be a detoxifying enzyme, converting toxic phenolic compounds into non-toxic materials. In Lelliottia amnigena (Enterobacter amnigenus), this protein is Arylsulfate sulfotransferase AssT.